Reading from the N-terminus, the 202-residue chain is uncharacterized protein (202 aa).

Positions 1-202 (MRGILRMTVL…KGLRSAAEKR (202 aa)) constitute an START domain.

Functionally, may play a role in the interaction of the bacterium with animal cells. This is an uncharacterized protein from Pseudomonas aeruginosa (strain ATCC 15692 / DSM 22644 / CIP 104116 / JCM 14847 / LMG 12228 / 1C / PRS 101 / PAO1).